A 142-amino-acid chain; its full sequence is MKTFSAKAHEVKREWYVVDAADKVLGRLAAEIARRLRGKHKPEFTPHVDTGDFIVVVNVEKLRVTGTKAQDKKYYRHSGYPGGIYERTFTELQNQFPERVLEKAVKGMLPKGPLGYAMIKKLKVYSGSEHPHAAQQPKVLEI.

The protein belongs to the universal ribosomal protein uL13 family. As to quaternary structure, part of the 50S ribosomal subunit.

This protein is one of the early assembly proteins of the 50S ribosomal subunit, although it is not seen to bind rRNA by itself. It is important during the early stages of 50S assembly. The chain is Large ribosomal subunit protein uL13 from Chromobacterium violaceum (strain ATCC 12472 / DSM 30191 / JCM 1249 / CCUG 213 / NBRC 12614 / NCIMB 9131 / NCTC 9757 / MK).